Here is a 783-residue protein sequence, read N- to C-terminus: Protein involved in starch initiation 1 (783 aa).

A chloroplast-targeting transit peptide spans 1 to 27 (MGFSQAIRLNLASFSSPSPCDYCLTRV). 3 coiled-coil regions span residues 128-309 (LHDA…LKEE), 345-432 (LVFS…LELA), and 457-512 (LQEK…LKAL).

Interacts with PTST2; the interaction is essential for the initiation of starch granules biosynthesis in leaf chloroplasts. Interacts with SS4; the interaction is essential for the initiation of starch granules biosynthesis in leaf chloroplasts.

It localises to the plastid. It is found in the chloroplast. Functionally, required for the initiation of starch granules biosynthesis in leaf chloroplasts. Involved in determining starch granule number and size in chloroplasts. This Arabidopsis thaliana (Mouse-ear cress) protein is Protein involved in starch initiation 1.